A 271-amino-acid polypeptide reads, in one-letter code: 5'-AMP-activated protein kinase subunit beta-2 (271 aa).

The segment at 1–47 (MGNTTSERVSGERHGAKAARAEGGGHGPGKEHKIMVGSTDDPSVFSL) is disordered. Serine 38 is subject to Phosphoserine; by ULK1. Threonine 39 is modified (phosphothreonine; by ULK1). Phosphoserine; by ULK1 is present on serine 68. A phosphoserine mark is found at serine 94 and serine 107. Threonine 147 bears the Phosphothreonine mark. Phosphoserine occurs at positions 157 and 169. The residue at position 173 (serine 173) is a Phosphoserine; by ULK1. Position 183 is a phosphoserine (serine 183).

The protein belongs to the 5'-AMP-activated protein kinase beta subunit family. As to quaternary structure, AMPK is a heterotrimer of an alpha catalytic subunit (PRKAA1 or PRKAA2), a beta (PRKAB1 or PRKAB2) and a gamma non-catalytic subunits (PRKAG1, PRKAG2 or PRKAG3). Phosphorylated when associated with the catalytic subunit (PRKAA1 or PRKAA2). Phosphorylated by ULK1 and ULK2; leading to negatively regulate AMPK activity and suggesting the existence of a regulatory feedback loop between ULK1, ULK2 and AMPK.

Its function is as follows. Non-catalytic subunit of AMP-activated protein kinase (AMPK), an energy sensor protein kinase that plays a key role in regulating cellular energy metabolism. In response to reduction of intracellular ATP levels, AMPK activates energy-producing pathways and inhibits energy-consuming processes: inhibits protein, carbohydrate and lipid biosynthesis, as well as cell growth and proliferation. AMPK acts via direct phosphorylation of metabolic enzymes, and by longer-term effects via phosphorylation of transcription regulators. Also acts as a regulator of cellular polarity by remodeling the actin cytoskeleton; probably by indirectly activating myosin. Beta non-catalytic subunit acts as a scaffold on which the AMPK complex assembles, via its C-terminus that bridges alpha (PRKAA1 or PRKAA2) and gamma subunits (PRKAG1, PRKAG2 or PRKAG3). This is 5'-AMP-activated protein kinase subunit beta-2 (Prkab2) from Rattus norvegicus (Rat).